A 125-amino-acid polypeptide reads, in one-letter code: Large ribosomal subunit protein bL17 (125 aa).

It belongs to the bacterial ribosomal protein bL17 family. In terms of assembly, part of the 50S ribosomal subunit. Contacts protein L32.

This is Large ribosomal subunit protein bL17 from Blochmanniella pennsylvanica (strain BPEN).